Consider the following 81-residue polypeptide: Relaxin-like protein AGF (81 aa).

Cystine bridges form between Cys14/Cys66, Cys26/Cys79, and Cys65/Cys70. N-linked (GlcNAc...) asparagine glycosylation occurs at Asn37.

The protein belongs to the insulin family. As to quaternary structure, heterodimer of a B chain and an A chain linked by two disulfide bonds.

The protein resides in the secreted. Functionally, uncertain. In Hypanus sabinus (Atlantic stingray), this protein is Relaxin-like protein AGF.